The chain runs to 282 residues: HMG box-containing protein R545 (282 aa).

The interval 1–282 (MPKKTATKAN…KKEASDEESD (282 aa)) is disordered. Acidic residues predominate over residues 16–29 (DSENDSVVSEEEDN). Over residues 70–87 (KGKVNAKKAPAKKAPVKK) the composition is skewed to basic residues. Over residues 93-121 (DSDNEEDEASEDGSDDEEDVVSADDSDSD) the composition is skewed to acidic residues. Positions 127–153 (KAAKKAPAKKAPAKKAPAKKAPAKKGK) are enriched in basic residues. Basic and acidic residues-rich tracts occupy residues 176–187 (TKKDGDKPKKPL) and 197–214 (RMPE…KEYM). Residues 183-252 (PKKPLSDYQK…KAPAKGGSKS (70 aa)) constitute a DNA-binding region (HMG box). The span at 253–273 (TAKKAPAKKAPAKKAPAKKSK) shows a compositional bias: basic residues.

This is HMG box-containing protein R545 from Acanthamoeba polyphaga mimivirus (APMV).